The following is a 509-amino-acid chain: MGPCCSKQTKALNNQPDKSKSKDVVLKENTSPFSQNTNNIMHVSHNQPPNINPPMLGGPGVTIFVALYDYEARISEDLSFKKGERLQIINTADGDWWYARSLITNSEGYIPSTYVAPEKSYEAEEWYFGDVKRAEAEKRLMVRGLPSGTFLIRKAETAVGNFSLSVRDGDSVKHYRVRKLDTGGYFITTRAPFNSLYELVQHYTKDADGLVCALTLPCPKDKPVTGGIAKDAWEIPRESLRLNRKLGAGQFGEVWAGVWNNTTQVAVKTLKPGTMSPASFLDEAGVMKKLRHKHLVQLYAICSDREPIYIVTEYMSGGSLLDYLSKGEGVNLQLPTLIDMAAQVASGMAFLEAQGYIHRDLAARNILVGENYICKVADFGLARLIEDDEYTAHEGAKFPIKWTAPEAALYNRFTIKSDVWSFGILMAEIVTKGRIPYPGMTNAQTIAEVEKGYRMPIMPGCPEPLYNIMLQTWNKDPENRPTFDYLQGVLEDYFVSTEQGYRDLGEANS.

The span at 1-16 shows a compositional bias: polar residues; it reads MGPCCSKQTKALNNQP. Positions 1–23 are disordered; the sequence is MGPCCSKQTKALNNQPDKSKSKD. Residue glycine 2 is the site of N-myristoyl glycine attachment. The region spanning 59–120 is the SH3 domain; sequence PGVTIFVALY…PSTYVAPEKS (62 aa). The SH2 domain maps to 126–218; that stretch reads WYFGDVKRAE…GLVCALTLPC (93 aa). Residues 240-495 form the Protein kinase domain; it reads LRLNRKLGAG…LQGVLEDYFV (256 aa). Residues 246 to 254 and lysine 268 each bind ATP; that span reads LGAGQFGEV. Catalysis depends on aspartate 360, which acts as the Proton acceptor. Tyrosine 390 is modified (phosphotyrosine; by autocatalysis).

This sequence belongs to the protein kinase superfamily. Tyr protein kinase family. SRC subfamily.

It carries out the reaction L-tyrosyl-[protein] + ATP = O-phospho-L-tyrosyl-[protein] + ADP + H(+). The polypeptide is Tyrosine-protein kinase STK (STK) (Hydra vulgaris (Hydra)).